Here is a 372-residue protein sequence, read N- to C-terminus: tRNA-specific 2-thiouridylase MnmA (372 aa).

ATP contacts are provided by residues 11-18 (GMSGGVDS) and methionine 37. Residues 97 to 99 (NPD) are interaction with target base in tRNA. Cysteine 102 acts as the Nucleophile in catalysis. Cysteine 102 and cysteine 199 are joined by a disulfide. Glycine 126 contributes to the ATP binding site. Residues 149 to 151 (KDQ) are interaction with tRNA. Catalysis depends on cysteine 199, which acts as the Cysteine persulfide intermediate. Residues 309–310 (RY) are interaction with tRNA.

The protein belongs to the MnmA/TRMU family.

It is found in the cytoplasm. It catalyses the reaction S-sulfanyl-L-cysteinyl-[protein] + uridine(34) in tRNA + AH2 + ATP = 2-thiouridine(34) in tRNA + L-cysteinyl-[protein] + A + AMP + diphosphate + H(+). Functionally, catalyzes the 2-thiolation of uridine at the wobble position (U34) of tRNA, leading to the formation of s(2)U34. In Staphylococcus aureus (strain bovine RF122 / ET3-1), this protein is tRNA-specific 2-thiouridylase MnmA.